The following is a 230-amino-acid chain: Thymidylate kinase (230 aa).

20–27 is an ATP binding site; that stretch reads GGEGAGKS.

The protein belongs to the thymidylate kinase family.

It catalyses the reaction dTMP + ATP = dTDP + ADP. Phosphorylation of dTMP to form dTDP in both de novo and salvage pathways of dTTP synthesis. This is Thymidylate kinase from Rhodopseudomonas palustris (strain BisB18).